The following is a 301-amino-acid chain: Protein p34 (301 aa).

Helical transmembrane passes span 15-35 (YLSV…WVVT), 40-60 (ILAA…NLIA), 83-103 (TIFS…FSSV), 120-140 (TVMY…TYVI), and 171-191 (LSDY…LYIF).

This sequence belongs to the cation diffusion facilitator (CDF) transporter (TC 2.A.4) family.

The protein localises to the cell membrane. The sequence is that of Protein p34 (p34) from Rickettsia rickettsii (strain Sheila Smith).